Consider the following 101-residue polypeptide: MIPGEIIAASGDIELNAGAPTVTLEVSNTGDRPVQVGSHYHFAETNAGLSFDRAAAHGKRLDIPSGTAVRFEPGQTRSVTLIPLSGRREVYGFRQLVMGKL.

It belongs to the urease beta subunit family. Heterotrimer of UreA (gamma), UreB (beta) and UreC (alpha) subunits. Three heterotrimers associate to form the active enzyme.

It localises to the cytoplasm. The catalysed reaction is urea + 2 H2O + H(+) = hydrogencarbonate + 2 NH4(+). The protein operates within nitrogen metabolism; urea degradation; CO(2) and NH(3) from urea (urease route): step 1/1. The chain is Urease subunit beta from Rhizobium etli (strain ATCC 51251 / DSM 11541 / JCM 21823 / NBRC 15573 / CFN 42).